The following is an 84-amino-acid chain: Large ribosomal subunit protein bL27 (84 aa).

The tract at residues 1–22 is disordered; that stretch reads MAHKKAGGSTRNGRDSESKRLG.

It belongs to the bacterial ribosomal protein bL27 family.

This chain is Large ribosomal subunit protein bL27, found in Shewanella amazonensis (strain ATCC BAA-1098 / SB2B).